We begin with the raw amino-acid sequence, 492 residues long: N-succinylglutamate 5-semialdehyde dehydrogenase (492 aa).

Gly-220 to Gly-225 is an NAD(+) binding site. Residues Glu-243 and Cys-277 contribute to the active site.

This sequence belongs to the aldehyde dehydrogenase family. AstD subfamily.

The enzyme catalyses N-succinyl-L-glutamate 5-semialdehyde + NAD(+) + H2O = N-succinyl-L-glutamate + NADH + 2 H(+). It functions in the pathway amino-acid degradation; L-arginine degradation via AST pathway; L-glutamate and succinate from L-arginine: step 4/5. Its function is as follows. Catalyzes the NAD-dependent reduction of succinylglutamate semialdehyde into succinylglutamate. This is N-succinylglutamate 5-semialdehyde dehydrogenase from Salmonella typhi.